The primary structure comprises 178 residues: Large ribosomal subunit protein bL25 (178 aa).

The protein belongs to the bacterial ribosomal protein bL25 family. CTC subfamily. Part of the 50S ribosomal subunit; part of the 5S rRNA/L5/L18/L25 subcomplex. Contacts the 5S rRNA. Binds to the 5S rRNA independently of L5 and L18.

This is one of the proteins that binds to the 5S RNA in the ribosome where it forms part of the central protuberance. The protein is Large ribosomal subunit protein bL25 of Helicobacter pylori (strain Shi470).